Consider the following 302-residue polypeptide: Sulfate adenylyltransferase subunit 2 (302 aa).

Positions 280-302 are disordered; it reads RQGRLIDSDQSASMEQKKRQGYF.

It belongs to the PAPS reductase family. CysD subfamily. Heterodimer composed of CysD, the smaller subunit, and CysN.

It carries out the reaction sulfate + ATP + H(+) = adenosine 5'-phosphosulfate + diphosphate. It functions in the pathway sulfur metabolism; hydrogen sulfide biosynthesis; sulfite from sulfate: step 1/3. Functionally, with CysN forms the ATP sulfurylase (ATPS) that catalyzes the adenylation of sulfate producing adenosine 5'-phosphosulfate (APS) and diphosphate, the first enzymatic step in sulfur assimilation pathway. APS synthesis involves the formation of a high-energy phosphoric-sulfuric acid anhydride bond driven by GTP hydrolysis by CysN coupled to ATP hydrolysis by CysD. The chain is Sulfate adenylyltransferase subunit 2 from Shewanella putrefaciens (strain CN-32 / ATCC BAA-453).